An 88-amino-acid chain; its full sequence is Alpha-latrotoxin-associated low molecular weight protein (88 aa).

Positions 1–18 (MSKLFFVVFLCLIISVFA) are cleaved as a signal peptide.

The protein belongs to the arthropod CHH/MIH/GIH/VIH hormone family. In terms of tissue distribution, expressed by the venom gland.

It localises to the secreted. Functionally, may increase the toxicity of alpha-latrotoxin and/or other venom components. Is non-toxic to mice and to the cockroach Periplaneta americana. This Latrodectus tredecimguttatus (Mediterranean black widow spider) protein is Alpha-latrotoxin-associated low molecular weight protein.